Consider the following 100-residue polypeptide: Testis development-related protein 1 (100 aa).

A disordered region spans residues 73-100 (GLGSLGGQDSSGSLVQRASCELESPYEL).

As to expression, expressed in the testis but not in any other non-reproductive tissues (at protein level). Mainly located in spermatogenic cells in seminiferous tubules of adult testis.

The protein resides in the cytoplasm. The chain is Testis development-related protein 1 (TDRG1) from Homo sapiens (Human).